A 761-amino-acid polypeptide reads, in one-letter code: Ribonucleoside-diphosphate reductase 1 subunit alpha (761 aa).

Residues 5-95 form the ATP-cone domain; the sequence is LLVTKRDGST…IFHLRKKAYG (91 aa). ATP contacts are provided by residues Lys9, 15 to 21, Thr55, and Lys91; that span reads ERINLDK. Thr209 is a GDP binding site. Cys225 and Cys462 are oxidised to a cystine. DTTP-binding positions include 232–234, Arg262, and Arg269; that span reads DSL. Lys283 carries the N6-acetyllysine modification. Residue Asn437 participates in GDP binding. The active-site Proton acceptor is Asn437. Cys439 acts as the Cysteine radical intermediate in catalysis. GDP-binding positions include Glu441 and 623-625; that span reads ETS. The Proton acceptor role is filled by Glu441.

This sequence belongs to the ribonucleoside diphosphate reductase large chain family. As to quaternary structure, tetramer of two alpha (R1) and two beta (R2) subunits. The B1 protein is a dimer of alpha subunits. A radical transfer pathway occurs between 'Tyr-122' of R2 and R1. Binding of the substrate occurs primarily when the active-site cysteines are reduced.

It catalyses the reaction a 2'-deoxyribonucleoside 5'-diphosphate + [thioredoxin]-disulfide + H2O = a ribonucleoside 5'-diphosphate + [thioredoxin]-dithiol. Under complex allosteric control mediated by deoxynucleoside triphosphates and ATP binding to separate specificity and activation sites on the alpha subunit. The type of nucleotide bound at the specificity site determines substrate preference. It seems probable that ATP makes the enzyme reduce CDP and UDP, dGTP favors ADP reduction and dTTP favors GDP reduction. Stimulated by ATP and inhibited by dATP binding to the activity site. In vitro, its activity is increased by dithiothreitol (DTT) or thioredoxins (non-specific). Inhibited by hydroxyurea, leads to dNTP depletion, replication fork arrest and genomic instability. Provides the precursors necessary for DNA synthesis. Catalyzes the biosynthesis of deoxyribonucleotides from the corresponding ribonucleotides. R1 contains the binding sites for both substrates and allosteric effectors and carries out the actual reduction of the ribonucleotide. It also provides redox-active cysteines. The sequence is that of Ribonucleoside-diphosphate reductase 1 subunit alpha (nrdA) from Escherichia coli (strain K12).